We begin with the raw amino-acid sequence, 242 residues long: Type III pantothenate kinase (242 aa).

ATP is bound at residue D7–K14. Substrate is bound by residues Y88 and G95–R98. D97 (proton acceptor) is an active-site residue. Residue D117 participates in K(+) binding. T120 provides a ligand contact to ATP. T172 is a binding site for substrate.

The protein belongs to the type III pantothenate kinase family. In terms of assembly, homodimer. NH4(+) is required as a cofactor. The cofactor is K(+).

It is found in the cytoplasm. It catalyses the reaction (R)-pantothenate + ATP = (R)-4'-phosphopantothenate + ADP + H(+). Its pathway is cofactor biosynthesis; coenzyme A biosynthesis; CoA from (R)-pantothenate: step 1/5. Catalyzes the phosphorylation of pantothenate (Pan), the first step in CoA biosynthesis. The chain is Type III pantothenate kinase from Akkermansia muciniphila (strain ATCC BAA-835 / DSM 22959 / JCM 33894 / BCRC 81048 / CCUG 64013 / CIP 107961 / Muc).